The following is a 308-amino-acid chain: Methionyl-tRNA formyltransferase (308 aa).

110-113 (SLLP) provides a ligand contact to (6S)-5,6,7,8-tetrahydrofolate.

Belongs to the Fmt family.

It carries out the reaction L-methionyl-tRNA(fMet) + (6R)-10-formyltetrahydrofolate = N-formyl-L-methionyl-tRNA(fMet) + (6S)-5,6,7,8-tetrahydrofolate + H(+). Its function is as follows. Attaches a formyl group to the free amino group of methionyl-tRNA(fMet). The formyl group appears to play a dual role in the initiator identity of N-formylmethionyl-tRNA by promoting its recognition by IF2 and preventing the misappropriation of this tRNA by the elongation apparatus. In Mycobacterium sp. (strain KMS), this protein is Methionyl-tRNA formyltransferase.